The primary structure comprises 512 residues: Probable malate:quinone oxidoreductase (512 aa).

This sequence belongs to the MQO family. Requires FAD as cofactor.

The enzyme catalyses (S)-malate + a quinone = a quinol + oxaloacetate. It participates in carbohydrate metabolism; tricarboxylic acid cycle; oxaloacetate from (S)-malate (quinone route): step 1/1. This is Probable malate:quinone oxidoreductase from Rhodococcus erythropolis (strain PR4 / NBRC 100887).